Reading from the N-terminus, the 192-residue chain is uncharacterized protein (192 aa).

This is an uncharacterized protein from Acidianus convivator (ATV).